The primary structure comprises 88 residues: Probable oxaloacetate decarboxylase gamma chain (88 aa).

Residues 13 to 35 form a helical membrane-spanning segment; that stretch reads LMFSGMGFVIIFLLILIWAIGIV.

It belongs to the OadG family. Heterotrimer of an alpha, a beta and a gamma subunit. Na(+) is required as a cofactor.

It localises to the cell membrane. The enzyme catalyses oxaloacetate + 2 Na(+)(in) + H(+) = pyruvate + 2 Na(+)(out) + CO2. Catalyzes the decarboxylation of oxaloacetate coupled to Na(+) translocation. The sequence is that of Probable oxaloacetate decarboxylase gamma chain from Mannheimia succiniciproducens (strain KCTC 0769BP / MBEL55E).